The primary structure comprises 585 residues: RNA polymerase sigma factor RpoD (585 aa).

The disordered stretch occupies residues 67-93 (PASTLVPKDDSKPARKKKESSASTSGS). Positions 351–421 (LVKANLRLVV…TRAISDQART (71 aa)) are sigma-70 factor domain-2. The short motif at 375 to 378 (DLIQ) is the Interaction with polymerase core subunit RpoC element. Positions 430 to 506 (EQVNKVIRET…DTEVETPVNA (77 aa)) are sigma-70 factor domain-3. The sigma-70 factor domain-4 stretch occupies residues 519 to 572 (VLHTLPAREQKVIRMRFGLDDGYPQTLEEVGYQFKVTRERIRQIEAKALRRLRH). The segment at residues 545 to 564 (LEEVGYQFKVTRERIRQIEA) is a DNA-binding region (H-T-H motif).

It belongs to the sigma-70 factor family. RpoD/SigA subfamily. As to quaternary structure, interacts transiently with the RNA polymerase catalytic core.

It localises to the cytoplasm. Its function is as follows. Sigma factors are initiation factors that promote the attachment of RNA polymerase to specific initiation sites and are then released. This sigma factor is the primary sigma factor during exponential growth. This Leptospira interrogans serogroup Icterohaemorrhagiae serovar copenhageni (strain Fiocruz L1-130) protein is RNA polymerase sigma factor RpoD.